A 244-amino-acid chain; its full sequence is Biosynthetic peptidoglycan transglycosylase (244 aa).

A helical membrane pass occupies residues Leu23–Phe43.

The protein belongs to the glycosyltransferase 51 family.

The protein localises to the cell inner membrane. It catalyses the reaction [GlcNAc-(1-&gt;4)-Mur2Ac(oyl-L-Ala-gamma-D-Glu-L-Lys-D-Ala-D-Ala)](n)-di-trans,octa-cis-undecaprenyl diphosphate + beta-D-GlcNAc-(1-&gt;4)-Mur2Ac(oyl-L-Ala-gamma-D-Glu-L-Lys-D-Ala-D-Ala)-di-trans,octa-cis-undecaprenyl diphosphate = [GlcNAc-(1-&gt;4)-Mur2Ac(oyl-L-Ala-gamma-D-Glu-L-Lys-D-Ala-D-Ala)](n+1)-di-trans,octa-cis-undecaprenyl diphosphate + di-trans,octa-cis-undecaprenyl diphosphate + H(+). It participates in cell wall biogenesis; peptidoglycan biosynthesis. Peptidoglycan polymerase that catalyzes glycan chain elongation from lipid-linked precursors. This chain is Biosynthetic peptidoglycan transglycosylase, found in Pectobacterium carotovorum subsp. carotovorum (strain PC1).